The primary structure comprises 199 residues: Protein GrpE (199 aa).

A disordered region spans residues 1–50 (MAKKSTRTTPEDSQASTTDSAATSTASEATQAATSATDDQAEQTTAVDPT). A compositionally biased stretch (low complexity) spans 11-46 (EDSQASTTDSAATSTASEATQAATSATDDQAEQTTA).

This sequence belongs to the GrpE family. Homodimer.

It localises to the cytoplasm. Its function is as follows. Participates actively in the response to hyperosmotic and heat shock by preventing the aggregation of stress-denatured proteins, in association with DnaK and GrpE. It is the nucleotide exchange factor for DnaK and may function as a thermosensor. Unfolded proteins bind initially to DnaJ; upon interaction with the DnaJ-bound protein, DnaK hydrolyzes its bound ATP, resulting in the formation of a stable complex. GrpE releases ADP from DnaK; ATP binding to DnaK triggers the release of the substrate protein, thus completing the reaction cycle. Several rounds of ATP-dependent interactions between DnaJ, DnaK and GrpE are required for fully efficient folding. This Lactiplantibacillus plantarum (strain ATCC BAA-793 / NCIMB 8826 / WCFS1) (Lactobacillus plantarum) protein is Protein GrpE.